The following is a 493-amino-acid chain: Probable fatty acyl-CoA reductase 4 (493 aa).

Belongs to the fatty acyl-CoA reductase family. Expressed in the endodermal cell layer surrounding the central vasculature in roots. Expressed in the hilum region of seeds. Expressed in stamen filaments and receptacle of siliques.

It carries out the reaction a long-chain fatty acyl-CoA + 2 NADPH + 2 H(+) = a long-chain primary fatty alcohol + 2 NADP(+) + CoA. Catalyzes the reduction of fatty acyl-CoA to fatty alcohols. Catalyzes specifically the formation of C18:0 and C20:0 fatty alcohols. Provides the fatty alcohols required for synthesis of suberin in roots, seed coat and wound-induced leaf tissue. Provides the fatty alcohols required for synthesis of alkyl hydroxycinnamates in root waxes. In Arabidopsis thaliana (Mouse-ear cress), this protein is Probable fatty acyl-CoA reductase 4.